We begin with the raw amino-acid sequence, 59 residues long: Large ribosomal subunit protein bL32 (59 aa).

Positions 1 to 59 are disordered; that stretch reads MAVQQNKKSPSKRGMHRAHDFLTTPPLAVESTTGEAHLRHHISPAGFYRGKKVTKGKGE. Residues 49-59 are compositionally biased toward basic residues; it reads RGKKVTKGKGE.

This sequence belongs to the bacterial ribosomal protein bL32 family.

This chain is Large ribosomal subunit protein bL32, found in Dechloromonas aromatica (strain RCB).